The primary structure comprises 550 residues: Glucose-6-phosphate isomerase 3 (550 aa).

Glu357 acts as the Proton donor in catalysis. Residues His388 and Lys514 contribute to the active site.

It belongs to the GPI family.

It is found in the cytoplasm. It carries out the reaction alpha-D-glucose 6-phosphate = beta-D-fructose 6-phosphate. Its pathway is carbohydrate biosynthesis; gluconeogenesis. It functions in the pathway carbohydrate degradation; glycolysis; D-glyceraldehyde 3-phosphate and glycerone phosphate from D-glucose: step 2/4. Functionally, catalyzes the reversible isomerization of glucose-6-phosphate to fructose-6-phosphate. The protein is Glucose-6-phosphate isomerase 3 of Rhodococcus jostii (strain RHA1).